Here is a 414-residue protein sequence, read N- to C-terminus: Probable sugar-binding periplasmic protein (414 aa).

An N-terminal signal peptide occupies residues 1 to 22 (MRKFMTTTAVAALMLAATAARA).

It belongs to the bacterial solute-binding protein 1 family.

It is found in the periplasm. In terms of biological role, part of a binding-protein-dependent transport system for a sugar. This is Probable sugar-binding periplasmic protein from Rhizobium meliloti (strain 1021) (Ensifer meliloti).